The sequence spans 167 residues: ATP synthase subunit b (167 aa).

A helical membrane pass occupies residues 9-29; the sequence is ALPLGNMLFIIIAFLLLMLIL.

This sequence belongs to the ATPase B chain family. As to quaternary structure, F-type ATPases have 2 components, F(1) - the catalytic core - and F(0) - the membrane proton channel. F(1) has five subunits: alpha(3), beta(3), gamma(1), delta(1), epsilon(1). F(0) has three main subunits: a(1), b(2) and c(10-14). The alpha and beta chains form an alternating ring which encloses part of the gamma chain. F(1) is attached to F(0) by a central stalk formed by the gamma and epsilon chains, while a peripheral stalk is formed by the delta and b chains.

The protein localises to the cell membrane. F(1)F(0) ATP synthase produces ATP from ADP in the presence of a proton or sodium gradient. F-type ATPases consist of two structural domains, F(1) containing the extramembraneous catalytic core and F(0) containing the membrane proton channel, linked together by a central stalk and a peripheral stalk. During catalysis, ATP synthesis in the catalytic domain of F(1) is coupled via a rotary mechanism of the central stalk subunits to proton translocation. Its function is as follows. Component of the F(0) channel, it forms part of the peripheral stalk, linking F(1) to F(0). The polypeptide is ATP synthase subunit b (Leuconostoc mesenteroides subsp. mesenteroides (strain ATCC 8293 / DSM 20343 / BCRC 11652 / CCM 1803 / JCM 6124 / NCDO 523 / NBRC 100496 / NCIMB 8023 / NCTC 12954 / NRRL B-1118 / 37Y)).